The chain runs to 269 residues: 4-hydroxy-tetrahydrodipicolinate reductase (269 aa).

11-16 (GPIGRM) contacts NAD(+). Position 39 (Lys39) interacts with NADP(+). NAD(+) is bound by residues 101 to 103 (GTT) and 125 to 128 (ASNF). The active-site Proton donor/acceptor is His158. Residue His159 participates in (S)-2,3,4,5-tetrahydrodipicolinate binding. Lys162 functions as the Proton donor in the catalytic mechanism. 168–169 (GT) is a binding site for (S)-2,3,4,5-tetrahydrodipicolinate.

It belongs to the DapB family. As to quaternary structure, homotetramer.

The protein resides in the cytoplasm. The enzyme catalyses (S)-2,3,4,5-tetrahydrodipicolinate + NAD(+) + H2O = (2S,4S)-4-hydroxy-2,3,4,5-tetrahydrodipicolinate + NADH + H(+). It catalyses the reaction (S)-2,3,4,5-tetrahydrodipicolinate + NADP(+) + H2O = (2S,4S)-4-hydroxy-2,3,4,5-tetrahydrodipicolinate + NADPH + H(+). It participates in amino-acid biosynthesis; L-lysine biosynthesis via DAP pathway; (S)-tetrahydrodipicolinate from L-aspartate: step 4/4. Functionally, catalyzes the conversion of 4-hydroxy-tetrahydrodipicolinate (HTPA) to tetrahydrodipicolinate. The protein is 4-hydroxy-tetrahydrodipicolinate reductase of Buchnera aphidicola subsp. Acyrthosiphon pisum (strain 5A).